The following is a 151-amino-acid chain: Large ribosomal subunit protein uL22 (151 aa).

Residues 1–25 (MARINYSVKEDPETTSKAMGSELHI) form a disordered region.

Belongs to the universal ribosomal protein uL22 family. In terms of assembly, part of the 50S ribosomal subunit.

Functionally, this protein binds specifically to 23S rRNA. It makes multiple contacts with different domains of the 23S rRNA in the assembled 50S subunit and ribosome. In terms of biological role, the globular domain of the protein is located near the polypeptide exit tunnel on the outside of the subunit, while an extended beta-hairpin is found that lines the wall of the exit tunnel in the center of the 70S ribosome. The sequence is that of Large ribosomal subunit protein uL22 from Methanosarcina barkeri (strain Fusaro / DSM 804).